We begin with the raw amino-acid sequence, 198 residues long: Nucleoside triphosphate pyrophosphatase (198 aa).

Aspartate 70 functions as the Proton acceptor in the catalytic mechanism.

It belongs to the Maf family. The cofactor is a divalent metal cation.

It is found in the cytoplasm. The catalysed reaction is a ribonucleoside 5'-triphosphate + H2O = a ribonucleoside 5'-phosphate + diphosphate + H(+). The enzyme catalyses a 2'-deoxyribonucleoside 5'-triphosphate + H2O = a 2'-deoxyribonucleoside 5'-phosphate + diphosphate + H(+). Functionally, nucleoside triphosphate pyrophosphatase. May have a dual role in cell division arrest and in preventing the incorporation of modified nucleotides into cellular nucleic acids. The protein is Nucleoside triphosphate pyrophosphatase of Thermosynechococcus vestitus (strain NIES-2133 / IAM M-273 / BP-1).